Consider the following 305-residue polypeptide: Ornithine carbamoyltransferase (305 aa).

Carbamoyl phosphate-binding positions include 50–53 (STRT), Gln77, Arg101, and 128–131 (HPCQ). Residues Asn162, Asp220, and 224 to 225 (SM) contribute to the L-ornithine site. Carbamoyl phosphate is bound by residues 260–261 (CL) and Arg288.

It belongs to the aspartate/ornithine carbamoyltransferase superfamily. OTCase family.

The protein resides in the cytoplasm. The enzyme catalyses carbamoyl phosphate + L-ornithine = L-citrulline + phosphate + H(+). It functions in the pathway amino-acid degradation; L-arginine degradation via ADI pathway; carbamoyl phosphate from L-arginine: step 2/2. In terms of biological role, reversibly catalyzes the transfer of the carbamoyl group from carbamoyl phosphate (CP) to the N(epsilon) atom of ornithine (ORN) to produce L-citrulline. This is Ornithine carbamoyltransferase from Akkermansia muciniphila (strain ATCC BAA-835 / DSM 22959 / JCM 33894 / BCRC 81048 / CCUG 64013 / CIP 107961 / Muc).